The chain runs to 423 residues: Glutamyl-tRNA reductase (423 aa).

Substrate-binding positions include 49 to 52 (TCNR), S111, 116 to 118 (EPQ), and Q122. C50 functions as the Nucleophile in the catalytic mechanism. 191-196 (GAGEMS) provides a ligand contact to NADP(+).

Belongs to the glutamyl-tRNA reductase family. As to quaternary structure, homodimer.

It catalyses the reaction (S)-4-amino-5-oxopentanoate + tRNA(Glu) + NADP(+) = L-glutamyl-tRNA(Glu) + NADPH + H(+). It functions in the pathway porphyrin-containing compound metabolism; protoporphyrin-IX biosynthesis; 5-aminolevulinate from L-glutamyl-tRNA(Glu): step 1/2. Functionally, catalyzes the NADPH-dependent reduction of glutamyl-tRNA(Glu) to glutamate 1-semialdehyde (GSA). The chain is Glutamyl-tRNA reductase from Syntrophus aciditrophicus (strain SB).